Consider the following 697-residue polypeptide: Elongation factor G (697 aa).

The tr-type G domain maps to A10 to L285. GTP contacts are provided by residues A19 to T26, D83 to H87, and N137 to D140.

It belongs to the TRAFAC class translation factor GTPase superfamily. Classic translation factor GTPase family. EF-G/EF-2 subfamily.

Its subcellular location is the cytoplasm. In terms of biological role, catalyzes the GTP-dependent ribosomal translocation step during translation elongation. During this step, the ribosome changes from the pre-translocational (PRE) to the post-translocational (POST) state as the newly formed A-site-bound peptidyl-tRNA and P-site-bound deacylated tRNA move to the P and E sites, respectively. Catalyzes the coordinated movement of the two tRNA molecules, the mRNA and conformational changes in the ribosome. The protein is Elongation factor G of Lactobacillus acidophilus (strain ATCC 700396 / NCK56 / N2 / NCFM).